The following is a 926-amino-acid chain: DNA mismatch repair protein MutS (926 aa).

Positions 16–40 (VASTPTRRGRPPGSSAARASNGAGS) are disordered. The segment covering 26–40 (PPGSSAARASNGAGS) has biased composition (low complexity). Residue 658–665 (GPNMAGKS) participates in ATP binding.

It belongs to the DNA mismatch repair MutS family.

Its function is as follows. This protein is involved in the repair of mismatches in DNA. It is possible that it carries out the mismatch recognition step. This protein has a weak ATPase activity. The protein is DNA mismatch repair protein MutS of Granulibacter bethesdensis (strain ATCC BAA-1260 / CGDNIH1).